Consider the following 326-residue polypeptide: Probable pectate lyase B (326 aa).

Residues 1-15 form the signal peptide; that stretch reads MRVTAILTLATIAIA. Ca(2+)-binding residues include Asp-133, Asp-162, and Asp-166. Arg-219 is a catalytic residue.

It belongs to the polysaccharide lyase 1 family. The cofactor is Ca(2+).

Its subcellular location is the secreted. The enzyme catalyses Eliminative cleavage of (1-&gt;4)-alpha-D-galacturonan to give oligosaccharides with 4-deoxy-alpha-D-galact-4-enuronosyl groups at their non-reducing ends.. In terms of biological role, pectinolytic enzyme consist of four classes of enzymes: pectin lyase, polygalacturonase, pectin methylesterase and rhamnogalacturonase. Among pectinolytic enzymes, pectin lyase is the most important in depolymerization of pectin, since it cleaves internal glycosidic bonds of highly methylated pectins. Favors pectate, the anion, over pectin, the methyl ester. The sequence is that of Probable pectate lyase B (plyB) from Aspergillus flavus (strain ATCC 200026 / FGSC A1120 / IAM 13836 / NRRL 3357 / JCM 12722 / SRRC 167).